Consider the following 403-residue polypeptide: Argininosuccinate synthase (403 aa).

Residue A10–S18 participates in ATP binding. Y87 is a binding site for L-citrulline. G117 is an ATP binding site. 3 residues coordinate L-aspartate: T119, N123, and D124. L-citrulline is bound at residue N123. R127, S175, S184, E260, and Y272 together coordinate L-citrulline.

The protein belongs to the argininosuccinate synthase family. Type 1 subfamily. In terms of assembly, homotetramer.

The protein localises to the cytoplasm. The enzyme catalyses L-citrulline + L-aspartate + ATP = 2-(N(omega)-L-arginino)succinate + AMP + diphosphate + H(+). It functions in the pathway amino-acid biosynthesis; L-arginine biosynthesis; L-arginine from L-ornithine and carbamoyl phosphate: step 2/3. The protein is Argininosuccinate synthase of Bacillus licheniformis (strain ATCC 14580 / DSM 13 / JCM 2505 / CCUG 7422 / NBRC 12200 / NCIMB 9375 / NCTC 10341 / NRRL NRS-1264 / Gibson 46).